The primary structure comprises 105 residues: uncharacterized protein (105 aa).

This is an uncharacterized protein from Felis catus (Cat).